The chain runs to 650 residues: Acetoacetyl-coenzyme A synthetase (650 aa).

Tyrosine 199–lysine 202 contacts CoA. ATP contacts are provided by residues glycine 392–proline 394, aspartate 504, arginine 519, and arginine 530. Valine 546 is a binding site for Mg(2+). Residue arginine 587 coordinates CoA. Lysine 612 is modified (N6-acetyllysine).

The protein belongs to the ATP-dependent AMP-binding enzyme family. The cofactor is Mg(2+). In terms of processing, acetylated. Deacetylation by the SIR2-homolog deacetylase activates the enzyme.

It carries out the reaction acetoacetate + ATP + CoA = acetoacetyl-CoA + AMP + diphosphate. It participates in biopolymer metabolism; poly-(R)-3-hydroxybutanoate degradation. Catalyzes the conversion of acetoacetate into acetoacetyl-CoA. Is involved in poly-3-hydroxybutyrate (PHB) degradation, which allows growth of R.meliloti on PHB cycle intermediates. This Rhizobium meliloti (strain 1021) (Ensifer meliloti) protein is Acetoacetyl-coenzyme A synthetase.